Reading from the N-terminus, the 428-residue chain is Adenylosuccinate synthetase (428 aa).

GTP-binding positions include 12–18 (GDEGKGK) and 40–42 (GHT). The active-site Proton acceptor is the Asp13. The Mg(2+) site is built by Asp13 and Gly40. IMP is bound by residues 13–16 (DEGK), 38–41 (NAGH), Thr129, Arg143, Gln224, Thr239, and Arg303. The Proton donor role is filled by His41. 299 to 305 (VTTGRIR) serves as a coordination point for substrate. GTP contacts are provided by residues Arg305, 331–333 (KVD), and 410–412 (AYG).

This sequence belongs to the adenylosuccinate synthetase family. In terms of assembly, homodimer. Mg(2+) serves as cofactor.

It is found in the cytoplasm. It catalyses the reaction IMP + L-aspartate + GTP = N(6)-(1,2-dicarboxyethyl)-AMP + GDP + phosphate + 2 H(+). The protein operates within purine metabolism; AMP biosynthesis via de novo pathway; AMP from IMP: step 1/2. Its function is as follows. Plays an important role in the de novo pathway of purine nucleotide biosynthesis. Catalyzes the first committed step in the biosynthesis of AMP from IMP. The chain is Adenylosuccinate synthetase from Francisella tularensis subsp. tularensis (strain FSC 198).